The following is a 261-amino-acid chain: Indole-3-glycerol phosphate synthase (261 aa).

It belongs to the TrpC family.

The catalysed reaction is 1-(2-carboxyphenylamino)-1-deoxy-D-ribulose 5-phosphate + H(+) = (1S,2R)-1-C-(indol-3-yl)glycerol 3-phosphate + CO2 + H2O. Its pathway is amino-acid biosynthesis; L-tryptophan biosynthesis; L-tryptophan from chorismate: step 4/5. In Oceanobacillus iheyensis (strain DSM 14371 / CIP 107618 / JCM 11309 / KCTC 3954 / HTE831), this protein is Indole-3-glycerol phosphate synthase.